Reading from the N-terminus, the 446-residue chain is N-succinylarginine dihydrolase (446 aa).

Substrate contacts are provided by residues 21–30 (AGLSWGNVAS), asparagine 112, and 139–140 (HR). The active site involves glutamate 176. Position 216 (arginine 216) interacts with substrate. Histidine 252 is a catalytic residue. Residues aspartate 254 and asparagine 364 each coordinate substrate. The active-site Nucleophile is cysteine 370.

It belongs to the succinylarginine dihydrolase family. Homodimer.

The catalysed reaction is N(2)-succinyl-L-arginine + 2 H2O + 2 H(+) = N(2)-succinyl-L-ornithine + 2 NH4(+) + CO2. The protein operates within amino-acid degradation; L-arginine degradation via AST pathway; L-glutamate and succinate from L-arginine: step 2/5. Functionally, catalyzes the hydrolysis of N(2)-succinylarginine into N(2)-succinylornithine, ammonia and CO(2). In Marinobacter nauticus (strain ATCC 700491 / DSM 11845 / VT8) (Marinobacter aquaeolei), this protein is N-succinylarginine dihydrolase.